A 545-amino-acid chain; its full sequence is ATP synthase subunit alpha (545 aa).

172–179 (GDRKTGKT) is a binding site for ATP.

The protein belongs to the ATPase alpha/beta chains family. In terms of assembly, F-type ATPases have 2 components, CF(1) - the catalytic core - and CF(0) - the membrane proton channel. CF(1) has five subunits: alpha(3), beta(3), gamma(1), delta(1), epsilon(1). CF(0) has three main subunits: a(1), b(2) and c(9-12). The alpha and beta chains form an alternating ring which encloses part of the gamma chain. CF(1) is attached to CF(0) by a central stalk formed by the gamma and epsilon chains, while a peripheral stalk is formed by the delta and b chains.

It is found in the cell membrane. It carries out the reaction ATP + H2O + 4 H(+)(in) = ADP + phosphate + 5 H(+)(out). Produces ATP from ADP in the presence of a proton gradient across the membrane. The alpha chain is a regulatory subunit. The chain is ATP synthase subunit alpha from Nocardia farcinica (strain IFM 10152).